The sequence spans 321 residues: F-box protein At4g35930 (321 aa).

Basic and acidic residues predominate over residues 1 to 13 (MGKVSPKDLDSKT). Positions 1 to 23 (MGKVSPKDLDSKTSVRKKKLKSS) are disordered. An F-box domain is found at 159 to 207 (ESQLESLPMDLLVKIVCHLHHDQLKAVFHVSQRIRMATILARQYHFNYT). The disordered stretch occupies residues 228–258 (WPFRRGDGNPTMVSSPHTPKAPKHAPRPPSR).

In Arabidopsis thaliana (Mouse-ear cress), this protein is F-box protein At4g35930.